We begin with the raw amino-acid sequence, 222 residues long: Glutathione S-transferase alpha-1 (222 aa).

Met1 carries the post-translational modification N-acetylmethionine. One can recognise a GST N-terminal domain in the interval 3–83 (GKPVLHYFNA…YIATKYDLYG (81 aa)). The residue at position 4 (Lys4) is an N6-succinyllysine. Glutathione contacts are provided by residues Tyr9, Lys45, 54–55 (QV), and 67–68 (QT). The 124-residue stretch at 85 to 208 (DMKERALIDM…QPGSQRKLPV (124 aa)) folds into the GST C-terminal domain.

This sequence belongs to the GST superfamily. Alpha family. Homodimer. Homodimer or heterodimer of GSTA1 and GSTA2.

The protein localises to the cytoplasm. The catalysed reaction is RX + glutathione = an S-substituted glutathione + a halide anion + H(+). It catalyses the reaction prostaglandin A2 + glutathione = prostaglandin A2-S-(R)-glutathione. The enzyme catalyses prostaglandin J2 + glutathione = prostaglandin J2-S-(R)-glutathione. It carries out the reaction (13S)-hydroperoxy-(9Z,11E)-octadecadienoate + 2 glutathione = (13S)-hydroxy-(9Z,11E)-octadecadienoate + glutathione disulfide + H2O. The catalysed reaction is androst-5-ene-3,17-dione = androst-4-ene-3,17-dione. In terms of biological role, glutathione S-transferase that catalyzes the nucleophilic attack of the sulfur atom of glutathione on the electrophilic groups of a wide range of exogenous and endogenous compounds. Involved in the formation of glutathione conjugates of both prostaglandin A2 (PGA2) and prostaglandin J2 (PGJ2). It also catalyzes the isomerization of D5-androstene-3,17-dione (AD) into D4-androstene-3,17-dione and may therefore play an important role in hormone biosynthesis. Through its glutathione-dependent peroxidase activity toward the fatty acid hydroperoxide (13S)-hydroperoxy-(9Z,11E)-octadecadienoate/13-HPODE it is also involved in the metabolism of oxidized linoleic acid. The protein is Glutathione S-transferase alpha-1 (Gsta1) of Rattus norvegicus (Rat).